Here is a 96-residue protein sequence, read N- to C-terminus: UPF0358 protein Aflv_1873 (96 aa).

This sequence belongs to the UPF0358 family.

This Anoxybacillus flavithermus (strain DSM 21510 / WK1) protein is UPF0358 protein Aflv_1873.